A 367-amino-acid polypeptide reads, in one-letter code: Probable neutral protease 2 homolog MCYG_00239 (367 aa).

A signal peptide spans 1 to 19 (MQVLVALAALSSLAAPVVG). Residues 20–190 (FSIPRGVPVS…DGPFTRIDKR (171 aa)) constitute a propeptide that is removed on maturation. Cystine bridges form between Cys198–Cys268, Cys275–Cys293, and Cys307–Cys367. His318 contacts Zn(2+). The active site involves Glu319. The Zn(2+) site is built by His322 and Asp333.

This sequence belongs to the peptidase M35 family. The cofactor is Zn(2+).

The protein resides in the secreted. It carries out the reaction Preferential cleavage of bonds with hydrophobic residues in P1'. Also 3-Asn-|-Gln-4 and 8-Gly-|-Ser-9 bonds in insulin B chain.. In terms of biological role, probable secreted metalloprotease that shows high activities on basic nuclear substrates such as histone and protamine. May be involved in virulence. This chain is Probable neutral protease 2 homolog MCYG_00239, found in Arthroderma otae (strain ATCC MYA-4605 / CBS 113480) (Microsporum canis).